The chain runs to 358 residues: tRNA pseudouridine synthase B (358 aa).

Residues methionine 1–valine 50 are disordered. Aspartate 87 serves as the catalytic Nucleophile.

It belongs to the pseudouridine synthase TruB family. Type 1 subfamily.

The enzyme catalyses uridine(55) in tRNA = pseudouridine(55) in tRNA. Functionally, responsible for synthesis of pseudouridine from uracil-55 in the psi GC loop of transfer RNAs. This chain is tRNA pseudouridine synthase B, found in Nitrobacter winogradskyi (strain ATCC 25391 / DSM 10237 / CIP 104748 / NCIMB 11846 / Nb-255).